Reading from the N-terminus, the 832-residue chain is Subtilisin-like protease SBT2.1 (832 aa).

Residues Met-1–Ala-24 form the signal peptide. Positions Glu-25–Ala-138 are cleaved as a propeptide — activation peptide. Residues Asn-29 and Asn-73 are each glycosylated (N-linked (GlcNAc...) asparagine). The 101-residue stretch at Val-36–Glu-136 folds into the Inhibitor I9 domain. In terms of domain architecture, Peptidase S8 spans Phe-145 to Leu-684. Asp-172 functions as the Charge relay system in the catalytic mechanism. N-linked (GlcNAc...) asparagine glycosylation is present at Asn-233. The active-site Charge relay system is His-247. N-linked (GlcNAc...) asparagine glycosylation is found at Asn-272, Asn-315, Asn-390, Asn-417, Asn-470, Asn-515, and Asn-522. Residues Leu-408–Ser-503 enclose the PA domain. Ser-609 (charge relay system) is an active-site residue. 6 N-linked (GlcNAc...) asparagine glycosylation sites follow: Asn-679, Asn-705, Asn-713, Asn-723, Asn-760, and Asn-801.

This sequence belongs to the peptidase S8 family.

It is found in the secreted. The polypeptide is Subtilisin-like protease SBT2.1 (Arabidopsis thaliana (Mouse-ear cress)).